A 498-amino-acid polypeptide reads, in one-letter code: UDP-N-acetylmuramate--L-alanine ligase (498 aa).

120–126 (GSHGKTT) contributes to the ATP binding site.

The protein belongs to the MurCDEF family.

It localises to the cytoplasm. The catalysed reaction is UDP-N-acetyl-alpha-D-muramate + L-alanine + ATP = UDP-N-acetyl-alpha-D-muramoyl-L-alanine + ADP + phosphate + H(+). It functions in the pathway cell wall biogenesis; peptidoglycan biosynthesis. Its function is as follows. Cell wall formation. This Rickettsia typhi (strain ATCC VR-144 / Wilmington) protein is UDP-N-acetylmuramate--L-alanine ligase.